We begin with the raw amino-acid sequence, 366 residues long: UDP-N-acetylglucosamine--N-acetylmuramyl-(pentapeptide) pyrophosphoryl-undecaprenol N-acetylglucosamine transferase (366 aa).

UDP-N-acetyl-alpha-D-glucosamine is bound by residues 14-16 (TGG), asparagine 125, arginine 168, serine 196, and glutamine 297.

Belongs to the glycosyltransferase 28 family. MurG subfamily.

The protein resides in the cell inner membrane. The enzyme catalyses di-trans,octa-cis-undecaprenyl diphospho-N-acetyl-alpha-D-muramoyl-L-alanyl-D-glutamyl-meso-2,6-diaminopimeloyl-D-alanyl-D-alanine + UDP-N-acetyl-alpha-D-glucosamine = di-trans,octa-cis-undecaprenyl diphospho-[N-acetyl-alpha-D-glucosaminyl-(1-&gt;4)]-N-acetyl-alpha-D-muramoyl-L-alanyl-D-glutamyl-meso-2,6-diaminopimeloyl-D-alanyl-D-alanine + UDP + H(+). The protein operates within cell wall biogenesis; peptidoglycan biosynthesis. Functionally, cell wall formation. Catalyzes the transfer of a GlcNAc subunit on undecaprenyl-pyrophosphoryl-MurNAc-pentapeptide (lipid intermediate I) to form undecaprenyl-pyrophosphoryl-MurNAc-(pentapeptide)GlcNAc (lipid intermediate II). This Rhodopseudomonas palustris (strain ATCC BAA-98 / CGA009) protein is UDP-N-acetylglucosamine--N-acetylmuramyl-(pentapeptide) pyrophosphoryl-undecaprenol N-acetylglucosamine transferase.